Here is a 386-residue protein sequence, read N- to C-terminus: EARP and GARP complex-interacting protein 1 (386 aa).

N-acetylmethionine is present on Met-1. 4 WD repeats span residues 132–172 (GAQG…SQAV), 182–222 (RGQL…QIYC), 226–266 (AHGQ…EPVK), and 270–310 (EHSH…SEPF). Residues 312–332 (HLVDDDDVSDPEEHHTEKSKE) are disordered. Ser-320 is modified (phosphoserine). The span at 322 to 332 (PEEHHTEKSKE) shows a compositional bias: basic and acidic residues. One copy of the WD 5 repeat lies at 344–384 (EHEDSVYAVDWASADPWLFASLSYDGRLVINRVPRALKYHI).

This sequence belongs to the WD repeat EIPR1 family. In terms of assembly, interacts with two multisubunit tethering complexes: EARP composed of VPS50, VPS51, VPS52 and VPS53 subunits and GARP complex composed of VPS51, VPS52, VPS53 and VPS54 subunits. Interacts with SNAP29. As to expression, ubiquitous. Highly expressed in brain, adipose tissue, spleen and kidney (at protein level).

It is found in the golgi apparatus. The protein localises to the trans-Golgi network. Functionally, acts as a component of endosomal retrieval machinery that is involved in protein transport from early endosomes to either recycling endosomes or the trans-Golgi network. Mediates the recruitment of Golgi-associated retrograde protein (GARP) complex to the trans-Golgi network and controls early endosome-to-Golgi transport of internalized protein. Promotes the recycling of internalized transferrin receptor (TFRC) to the plasma membrane through interaction with endosome-associated recycling protein (EARP) complex. Controls proper insulin distribution and secretion, and retention of cargo in mature dense core vesicles. Required for the stability of the endosome-associated retrograde protein (EARP) complex subunits and for proper localization and association of EARP with membranes. The sequence is that of EARP and GARP complex-interacting protein 1 from Rattus norvegicus (Rat).